Consider the following 330-residue polypeptide: DNA-directed RNA polymerase I subunit RPA43 (330 aa).

Residues 251–330 (ADVTDVTPQE…ANFESPKKRQ (80 aa)) form a disordered region. Phosphoserine is present on residues Ser306, Ser318, and Ser325. The segment covering 317–330 (HSEEANFESPKKRQ) has biased composition (basic and acidic residues).

It belongs to the eukaryotic RPA43 RNA polymerase subunit family. As to quaternary structure, component of the RNA polymerase I (Pol I) complex consisting of 13 subunits: a ten-subunit catalytic core composed of POLR1A/RPA1, POLR1B/RPA2, POLR1C/RPAC1, POLR1D/RPAC2, POLR1H/RPA12, POLR2E/RPABC1, POLR2F/RPABC2, POLR2H/RPABC3, POLR2K/RPABC4 and POLR2L/RPABC5; a mobile stalk subunit POLR1F/RPA43 protruding from the core and additional subunits homologous to general transcription factors POLR1E/RPA49 and POLR1G/RPA34. Interacts with RRN3/TIF-IA. Interacts with RRN3/TIF-IA. Widely expressed.

The protein resides in the nucleus. The protein localises to the nucleolus. In terms of biological role, component of RNA polymerase I (Pol I), a DNA-dependent RNA polymerase which synthesizes ribosomal RNA precursors using the four ribonucleoside triphosphates as substrates. Through its association with RRN3/TIF-IA may be involved in recruitment of Pol I to rDNA promoters. This chain is DNA-directed RNA polymerase I subunit RPA43, found in Mus musculus (Mouse).